A 311-amino-acid chain; its full sequence is Probable manganese-dependent inorganic pyrophosphatase (311 aa).

The Mn(2+) site is built by His-9, Asp-13, Asp-15, Asp-75, His-97, and Asp-149.

Belongs to the PPase class C family. Mn(2+) serves as cofactor.

Its subcellular location is the cytoplasm. It catalyses the reaction diphosphate + H2O = 2 phosphate + H(+). This chain is Probable manganese-dependent inorganic pyrophosphatase, found in Lactobacillus johnsonii (strain CNCM I-12250 / La1 / NCC 533).